Reading from the N-terminus, the 311-residue chain is Methionyl-tRNA formyltransferase (311 aa).

110–113 (SLLP) lines the (6S)-5,6,7,8-tetrahydrofolate pocket.

Belongs to the Fmt family.

It carries out the reaction L-methionyl-tRNA(fMet) + (6R)-10-formyltetrahydrofolate = N-formyl-L-methionyl-tRNA(fMet) + (6S)-5,6,7,8-tetrahydrofolate + H(+). Attaches a formyl group to the free amino group of methionyl-tRNA(fMet). The formyl group appears to play a dual role in the initiator identity of N-formylmethionyl-tRNA by promoting its recognition by IF2 and preventing the misappropriation of this tRNA by the elongation apparatus. This chain is Methionyl-tRNA formyltransferase, found in Streptococcus pneumoniae (strain Taiwan19F-14).